We begin with the raw amino-acid sequence, 1887 residues long: DNA-directed RNA polymerase II subunit RPB1 (1887 aa).

Zn(2+)-binding residues include cysteine 67, cysteine 70, cysteine 77, histidine 80, cysteine 107, cysteine 110, cysteine 150, and cysteine 176. Residues 156–178 (MDLTKENQQPDPNKKPGHGGCGH) form a disordered region. Aspartate 487, aspartate 489, and aspartate 491 together coordinate Mg(2+). Residues 825-837 (PSEFYFHAMGGRE) are bridging helix. Lysine 1260 is covalently cross-linked (Glycyl lysine isopeptide (Lys-Gly) (interchain with G-Cter in ubiquitin)). 2 disordered regions span residues 1528–1565 (TPGG…GPSM) and 1579–1887 (YSPT…ESED). 3 stretches are compositionally biased toward low complexity: residues 1529-1565 (PGGP…GPSM), 1579-1610 (YSPT…PTSP), and 1626-1650 (PQST…PTVQ). The stretch at 1579–1585 (YSPTSPN) is repeat 1. Residues 1579–1881 (YSPTSPNYTA…SPAYSPSSPT (303 aa)) are C-terminal domain (CTD); 32 X 7 AA approximate tandem repeats of Y-[ST]-P-[STNVAPGN]-[STGMA]-[PSTR]-[SNAGCQKTLRIMH]. Residues 1586–1592 (YTASSPG) form a 2; approximate repeat. A run of 4 repeats spans residues 1598–1604 (YSPSSPN), 1605–1611 (YSPTSPL), 1631–1637 (YSPSSSG), and 1638–1644 (YSPTSPV). The segment covering 1651–1664 (FQSSPSFAGSGSNI) has biased composition (polar residues). A compositionally biased stretch (low complexity) spans 1665 to 1760 (YSPGNAYSPS…GVKYSPTSPT (96 aa)). 17 repeat units span residues 1671–1677 (YSPSSSN), 1678–1684 (YSPNSPS), 1685–1691 (YSPTSPS), 1692–1698 (YSPSSPS), 1699–1705 (YSPTSPC), 1706–1712 (YSPTSPS), 1713–1719 (YSPTSPN), 1720–1726 (YTPVTPS), 1727–1733 (YSPTSPN), 1740–1746 (YSPASPA), 1754–1760 (YSPTSPT), 1761–1767 (YSPPSPS), 1777–1783 (YTPGSPQ), 1784–1790 (YSPASPK), 1791–1797 (YSPTSPL), 1798–1804 (YSPSSPQ), and 1811–1817 (YSPTGST). The span at 1776–1786 (QYTPGSPQYSP) shows a compositional bias: polar residues. The segment covering 1788-1813 (SPKYSPTSPLYSPSSPQHSPSNQYSP) has biased composition (low complexity). Polar residues predominate over residues 1814 to 1831 (TGSTYSATSPRYSPNMSI). Residues 1818 to 1824 (YSATSPR) form a 24; approximate repeat. Repeat copies occupy residues 1825–1831 (YSPNMSI), 1832–1838 (YSPSSTK), 1839–1845 (YSPTSPT), 1846–1852 (YTPTARN), 1853–1859 (YSPTSPM), 1860–1866 (YSPTAPS), 1868–1874 (YSPTSPA), and 1875–1881 (YSPSSPT). Low complexity predominate over residues 1832-1849 (YSPSSTKYSPTSPTYTPT). The span at 1850–1859 (ARNYSPTSPM) shows a compositional bias: polar residues. Residues 1860 to 1881 (YSPTAPSHYSPTSPAYSPSSPT) show a composition bias toward low complexity.

The protein belongs to the RNA polymerase beta' chain family. Component of the RNA polymerase II (Pol II) complex consisting of 12 subunits. The tandem 7 residues repeats in the C-terminal domain (CTD) can be highly phosphorylated. The phosphorylation activates Pol II. Phosphorylation occurs mainly at residues 'Ser-2' and 'Ser-5' of the heptapeptide repeat. The phosphorylation state is believed to result from the balanced action of site-specific CTD kinases and phosphatase, and a 'CTD code' that specifies the position of Pol II within the transcription cycle has been proposed. In terms of processing, following transcription stress, the elongating form of RNA polymerase II (RNA pol IIo) is polyubiquitinated via 'Lys-63'-linkages on Lys-1260 at DNA damage sites without leading to degradation: ubiquitination promotes RNA pol IIo backtracking to allow access by the transcription-coupled nucleotide excision repair (TC-NER) machinery. Subsequent DEF1-dependent polyubiquitination by the elongin complex via 'Lys-48'-linkages may lead to proteasome-mediated degradation; presumably at stalled RNA pol II where TC-NER has failed, to halt global transcription and enable 'last resort' DNA repair pathways.

The protein resides in the nucleus. The catalysed reaction is RNA(n) + a ribonucleoside 5'-triphosphate = RNA(n+1) + diphosphate. Its function is as follows. DNA-dependent RNA polymerase catalyzes the transcription of DNA into RNA using the four ribonucleoside triphosphates as substrates. Largest and catalytic component of RNA polymerase II which synthesizes mRNA precursors and many functional non-coding RNAs. Forms the polymerase active center together with the second largest subunit. Pol II is the central component of the basal RNA polymerase II transcription machinery. It is composed of mobile elements that move relative to each other. RPB1 is part of the core element with the central large cleft, the clamp element that moves to open and close the cleft and the jaws that are thought to grab the incoming DNA template. At the start of transcription, a single-stranded DNA template strand of the promoter is positioned within the central active site cleft of Pol II. A bridging helix emanates from RPB1 and crosses the cleft near the catalytic site and is thought to promote translocation of Pol II by acting as a ratchet that moves the RNA-DNA hybrid through the active site by switching from straight to bent conformations at each step of nucleotide addition. During transcription elongation, Pol II moves on the template as the transcript elongates. Elongation is influenced by the phosphorylation status of the C-terminal domain (CTD) of Pol II largest subunit (RPB1), which serves as a platform for assembly of factors that regulate transcription initiation, elongation, termination and mRNA processing. The polypeptide is DNA-directed RNA polymerase II subunit RPB1 (Drosophila melanogaster (Fruit fly)).